Consider the following 290-residue polypeptide: Expansin-A26 (290 aa).

The signal sequence occupies residues 1-29 (MDTTTTMAPLPLLTTTSLLLFFFLASSFA). Residues 45 to 67 (DGGGDGEGGGGGDGEGGGGGGGA) form a disordered region. The Expansin-like EG45 domain occupies 101–196 (GGACGYKDAD…RKVACVRQGG (96 aa)). An Expansin-like CBD domain is found at 206 to 286 (SYNMVMVKNV…DWTYDNTYQA (81 aa)). A glycan (N-linked (GlcNAc...) asparagine) is linked at Asn-250.

It belongs to the expansin family. Expansin A subfamily. As to expression, expressed in flowers.

It localises to the secreted. The protein localises to the cell wall. Its subcellular location is the membrane. Its function is as follows. May cause loosening and extension of plant cell walls by disrupting non-covalent bonding between cellulose microfibrils and matrix glucans. No enzymatic activity has been found. May be required for rapid internodal elongation in deepwater rice during submergence. The chain is Expansin-A26 (EXPA26) from Oryza sativa subsp. japonica (Rice).